The following is a 403-amino-acid chain: Acetate kinase (403 aa).

Asn-8 contributes to the Mg(2+) binding site. Lys-15 serves as a coordination point for ATP. Residue Arg-90 coordinates substrate. Asp-147 acts as the Proton donor/acceptor in catalysis. ATP contacts are provided by residues 207–211 (HLGSG), 282–284 (DLR), and 330–334 (GVGEN). Glu-384 is a binding site for Mg(2+).

The protein belongs to the acetokinase family. In terms of assembly, homodimer. Mg(2+) is required as a cofactor. The cofactor is Mn(2+).

Its subcellular location is the cytoplasm. The enzyme catalyses acetate + ATP = acetyl phosphate + ADP. The protein operates within metabolic intermediate biosynthesis; acetyl-CoA biosynthesis; acetyl-CoA from acetate: step 1/2. Functionally, catalyzes the formation of acetyl phosphate from acetate and ATP. Can also catalyze the reverse reaction. The polypeptide is Acetate kinase (Exiguobacterium sibiricum (strain DSM 17290 / CCUG 55495 / CIP 109462 / JCM 13490 / 255-15)).